We begin with the raw amino-acid sequence, 259 residues long: Dihydroorotate dehydrogenase B (NAD(+)), electron transfer subunit (259 aa).

The FAD-binding FR-type domain occupies 2–102 (MQKQNMIVVN…LGPLGHGFPL (101 aa)). Residues 53–56 (RPIS), 70–72 (LYR), and 77–78 (GT) contribute to the FAD site. Positions 221, 226, 229, and 246 each coordinate [2Fe-2S] cluster.

It belongs to the PyrK family. Heterotetramer of 2 PyrK and 2 PyrD type B subunits. Requires [2Fe-2S] cluster as cofactor. It depends on FAD as a cofactor.

Its pathway is pyrimidine metabolism; UMP biosynthesis via de novo pathway; orotate from (S)-dihydroorotate (NAD(+) route): step 1/1. Functionally, responsible for channeling the electrons from the oxidation of dihydroorotate from the FMN redox center in the PyrD type B subunit to the ultimate electron acceptor NAD(+). The polypeptide is Dihydroorotate dehydrogenase B (NAD(+)), electron transfer subunit (Bacillus cereus (strain B4264)).